The primary structure comprises 428 residues: Sporulation kinase B (428 aa).

The Cytoplasmic portion of the chain corresponds to 1 to 6 (MEILKD). A helical membrane pass occupies residues 7–27 (YLLHICFILFPILLYQVFWLG). Over 28-37 (KPAILVPKIN) the chain is Extracellular. The helical transmembrane segment at 38–58 (SGLVTLFACGASVLCIIFPIH) threads the bilayer. The Cytoplasmic segment spans residues 59-68 (EMDYIQYGLQ). Residues 69-89 (MIPVIICLFYISTASGLTVAA) traverse the membrane as a helical segment. The Extracellular segment spans residues 90–99 (SVLCFELLFY). A helical membrane pass occupies residues 100–120 (EPSAMFVFTLLPFLIIIPILF). Over 121 to 132 (QKKWPFMSKAKK) the chain is Cytoplasmic. A helical membrane pass occupies residues 133–153 (LLLSLLISCVEIFLFFASSWI). At 154-166 (LSALNILNFQKSG) the chain is on the extracellular side. A helical transmembrane segment spans residues 167-187 (IFVYEAAVSGLFRSSVLLLSI). Residues 188–428 (YIIESIAENI…TIKLPADLPH (241 aa)) lie on the Cytoplasmic side of the membrane. The Histidine kinase domain maps to 218-426 (SVAHEVRNPL…TVTIKLPADL (209 aa)). Histidine 221 bears the Phosphohistidine; by autocatalysis mark.

It is found in the cell membrane. It carries out the reaction ATP + protein L-histidine = ADP + protein N-phospho-L-histidine.. Functionally, phosphorylates the sporulation-regulatory proteins spo0A and spo0F. Spo0F is required for the KinB activity. The chain is Sporulation kinase B (kinB) from Bacillus subtilis (strain 168).